The following is a 391-amino-acid chain: S-adenosylmethionine synthase (391 aa).

His-19 contributes to the ATP binding site. Residue Asp-21 coordinates Mg(2+). Residue Glu-47 participates in K(+) binding. Positions 60 and 103 each coordinate L-methionine. Residues Gln-103–Arg-113 form a flexible loop region. Residues Asp-168–Lys-170, Arg-236–Phe-237, Asp-245, Arg-251–Lys-252, Ala-268, and Lys-272 contribute to the ATP site. Position 245 (Asp-245) interacts with L-methionine. Position 276 (Lys-276) interacts with L-methionine.

Belongs to the AdoMet synthase family. As to quaternary structure, homotetramer; dimer of dimers. Mg(2+) is required as a cofactor. Requires K(+) as cofactor.

The protein localises to the cytoplasm. It catalyses the reaction L-methionine + ATP + H2O = S-adenosyl-L-methionine + phosphate + diphosphate. The protein operates within amino-acid biosynthesis; S-adenosyl-L-methionine biosynthesis; S-adenosyl-L-methionine from L-methionine: step 1/1. In terms of biological role, catalyzes the formation of S-adenosylmethionine (AdoMet) from methionine and ATP. The overall synthetic reaction is composed of two sequential steps, AdoMet formation and the subsequent tripolyphosphate hydrolysis which occurs prior to release of AdoMet from the enzyme. The chain is S-adenosylmethionine synthase from Oleidesulfovibrio alaskensis (strain ATCC BAA-1058 / DSM 17464 / G20) (Desulfovibrio alaskensis).